The chain runs to 262 residues: MSTGVRPGRRFTVGRSEDATHPDTIRAAISEFIATAIFVFAAEGSVLSLGKMYHDMSTAGGLVAVALAHALALAVAVAVAVNISGGHVNPAVTFGALVGGRVSLVRAVLYWVAQLLGAVAATLLLRLATGGMRPPGFALASGVGDWHAVLLEAVMTFGLMYAYYATVIDPKRGHVGTIAPLAVGFLLGANVLAGGPFDGAGMNPARVFGPALVGWRWRHHWVYWLGPFLGAGLAGLVYEYLVIPSADAAVPHAHQPLAPEDY.

2 consecutive transmembrane segments (helical) span residues 27–47 (AAISEFIATAIFVFAAEGSVL) and 61–81 (GLVAVALAHALALAVAVAVAV). The NPA 1 motif lies at 89–91 (NPA). 3 consecutive transmembrane segments (helical) span residues 104–124 (LVRAVLYWVAQLLGAVAATLL), 148–168 (AVLLEAVMTFGLMYAYYATVI), and 175–195 (VGTIAPLAVGFLLGANVLAGG). The short motif at 203-205 (NPA) is the NPA 2 element. The helical transmembrane segment at 223-243 (YWLGPFLGAGLAGLVYEYLVI) threads the bilayer.

It belongs to the MIP/aquaporin (TC 1.A.8) family. TIP (TC 1.A.8.10) subfamily.

It localises to the vacuole membrane. Functionally, aquaporins facilitate the transport of water and small neutral solutes across cell membranes. This chain is Aquaporin TIP3-1 (TIP3-1), found in Zea mays (Maize).